A 378-amino-acid chain; its full sequence is Chloroplast stem-loop binding protein of 41 kDa b, chloroplastic (378 aa).

The N-terminal 50 residues, 1–50 (MAKMMMLQQHQPSFSLLTSSLSDFNGAKLHLQVQYKRKVHQPKGALYVSA), are a transit peptide targeting the chloroplast. Phosphoserine is present on Ser240.

This sequence belongs to the NAD(P)-dependent epimerase/dehydratase family. In terms of assembly, component of a complex made of CSP41A, CSP41B, ribosomes, and the plastid-encoded RNA polymerase. Interacts with CSP41A. Binds DNA when in complex with PRIN2. As to expression, highly expressed in seedlings, particularly in photosynthetically active organs. Mostly expressed in young and mature leaves, and, to a lower extent, in flowers. Low expression in etiolated seedlings compared to green seedlings.

The protein localises to the plastid. Its subcellular location is the chloroplast. It is found in the plastoglobule. It localises to the cytoplasm. In terms of biological role, binds and cleaves RNA, particularly in stem-loops. Associates with pre-ribosomal particles in chloroplasts, and participates in chloroplast ribosomal RNA metabolism, probably during the final steps of 23S rRNA maturation. May enhance transcription by the plastid-encoded polymerase and translation in plastid via the stabilization of ribosome assembly intermediates. Required for chloroplast integrity. Involved in the regulation of the circadian system. Involved in the regulation of heteroglycans and monosaccharide mobilization. Required for full expression of genes transcribed by the plastid-encoded RNA polymerase (PEP). Essential for embryo development. This Arabidopsis thaliana (Mouse-ear cress) protein is Chloroplast stem-loop binding protein of 41 kDa b, chloroplastic (CSP41B).